The chain runs to 305 residues: 2-pyrone-4,6-dicarbaxylate hydrolase (305 aa).

Residues 32–34, Tyr-50, Thr-78, Arg-125, Arg-131, Tyr-158, and His-182 contribute to the substrate site; that span reads HCH. Asp-258 serves as the catalytic Proton acceptor. Residue Asn-263 coordinates substrate.

The protein belongs to the metallo-dependent hydrolases superfamily. PDC hydrolase family.

It catalyses the reaction 2-oxo-2H-pyran-4,6-dicarboxylate + H2O = (1E)-4-oxobut-1-ene-1,2,4-tricarboxylate + H(+). With respect to regulation, strongly inhibited by 1 mM Zn(2+), Cu(2+), Mn(2+) and Co(2+) ions. Also inhibited by 5,5'-dithiobis(2-nitrobenzoic acid) (Ellman reagent) in vitro. In terms of biological role, involved in the degradation of aromatic compounds via the protocatechuate 4,5-cleavage pathway. Catalyzes the hydrolysis of 2-pyrone-4,6-dicarboxylate (PDC) to oxalomesaconate (OMA). Also catalyzes the reverse reaction. In Comamonas testosteroni (Pseudomonas testosteroni), this protein is 2-pyrone-4,6-dicarbaxylate hydrolase.